The sequence spans 472 residues: Tryptophanase (472 aa).

Lysine 270 is modified (N6-(pyridoxal phosphate)lysine).

Belongs to the beta-eliminating lyase family. In terms of assembly, homotetramer. Pyridoxal 5'-phosphate serves as cofactor.

It catalyses the reaction L-tryptophan + H2O = indole + pyruvate + NH4(+). The protein operates within amino-acid degradation; L-tryptophan degradation via pyruvate pathway; indole and pyruvate from L-tryptophan: step 1/1. The chain is Tryptophanase (tnaA) from Haemophilus influenzae.